Reading from the N-terminus, the 364-residue chain is Pre-small/secreted glycoprotein (364 aa).

The signal sequence occupies residues 1-32; sequence MGVTGILQLPRDRFKRTSFFLWVIILFQRTFS. The N-linked (GlcNAc...) asparagine; by host glycan is linked to Asn40. 2 disulfide bridges follow: Cys108/Cys135 and Cys121/Cys147. Residues Asn204, Asn228, Asn238, Asn257, and Asn268 are each glycosylated (N-linked (GlcNAc...) asparagine; by host).

It belongs to the filoviruses glycoprotein family. In terms of assembly, homodimer; disulfide-linked. The homodimers are linked by two disulfide bonds in a parallel orientation. Monomer. In terms of processing, this precursor is processed into mature sGP and delta-peptide by host furin or furin-like proteases. The cleavage site corresponds to the furin optimal cleavage sequence [KR]-X-[KR]-R. N-glycosylated. Post-translationally, O-glycosylated.

The protein resides in the secreted. In terms of biological role, seems to possess an anti-inflammatory activity as it can reverse the barrier-decreasing effects of TNF alpha. Might therefore contribute to the lack of inflammatory reaction seen during infection in spite the of extensive necrosis and massive virus production. Does not seem to be involved in activation of primary macrophages. Does not seem to interact specifically with neutrophils. Its function is as follows. Viroporin that permeabilizes mammalian cell plasma membranes. It acts by altering permeation of ionic compounds and small molecules. This activity may lead to viral enterotoxic activity. In Epomops franqueti (Franquet's epauletted fruit bat), this protein is Pre-small/secreted glycoprotein (GP).